The following is a 115-amino-acid chain: Large ribosomal subunit protein bL19 (115 aa).

This sequence belongs to the bacterial ribosomal protein bL19 family.

Its function is as follows. This protein is located at the 30S-50S ribosomal subunit interface and may play a role in the structure and function of the aminoacyl-tRNA binding site. The sequence is that of Large ribosomal subunit protein bL19 from Streptococcus suis (strain 98HAH33).